We begin with the raw amino-acid sequence, 224 residues long: Flagellar L-ring protein (224 aa).

Residues 1–15 form the signal peptide; sequence MARYLVLAVALLLAA. A lipid anchor (N-palmitoyl cysteine) is attached at Cys-16. The S-diacylglycerol cysteine moiety is linked to residue Cys-16.

This sequence belongs to the FlgH family. The basal body constitutes a major portion of the flagellar organelle and consists of four rings (L,P,S, and M) mounted on a central rod.

It localises to the cell outer membrane. The protein localises to the bacterial flagellum basal body. Functionally, assembles around the rod to form the L-ring and probably protects the motor/basal body from shearing forces during rotation. This is Flagellar L-ring protein from Shewanella baltica (strain OS223).